Reading from the N-terminus, the 547-residue chain is Chaperonin GroEL (547 aa).

ATP is bound by residues 30-33, Lys51, 87-91, Gly415, and Asp496; these read TLGP and DGTTT. Residues 528–547 form a disordered region; sequence KEGAAPAGGMPDMGGMGGMM. Over residues 538-547 the composition is skewed to gly residues; the sequence is PDMGGMGGMM.

It belongs to the chaperonin (HSP60) family. Forms a cylinder of 14 subunits composed of two heptameric rings stacked back-to-back. Interacts with the co-chaperonin GroES.

It is found in the cytoplasm. It carries out the reaction ATP + H2O + a folded polypeptide = ADP + phosphate + an unfolded polypeptide.. Its function is as follows. Together with its co-chaperonin GroES, plays an essential role in assisting protein folding. The GroEL-GroES system forms a nano-cage that allows encapsulation of the non-native substrate proteins and provides a physical environment optimized to promote and accelerate protein folding. The sequence is that of Chaperonin GroEL from Ruegeria sp. (strain TM1040) (Silicibacter sp.).